The sequence spans 570 residues: Endo-1,4-beta-xylanase 4 (570 aa).

A signal peptide spans 1–24 (MKRFNYGFFHLVLFLISLLLLGSG). N-linked (GlcNAc...) asparagine glycosylation is found at Asn-92, Asn-190, and Asn-300. Residues 195–494 (EGSVISIEQI…TQAGDLIDKL (300 aa)) enclose the GH10 domain. The active-site Proton donor is Glu-325. Asn-339 carries an N-linked (GlcNAc...) asparagine glycan. Glu-432 (nucleophile) is an active-site residue. The N-linked (GlcNAc...) asparagine glycan is linked to Asn-545.

The protein belongs to the glycosyl hydrolase 10 (cellulase F) family.

The catalysed reaction is Endohydrolysis of (1-&gt;4)-beta-D-xylosidic linkages in xylans.. It participates in glycan degradation; xylan degradation. Its function is as follows. Binds to and hydrolyzes insoluble and soluble xylan substrates. In Arabidopsis thaliana (Mouse-ear cress), this protein is Endo-1,4-beta-xylanase 4.